Reading from the N-terminus, the 81-residue chain is CLAVATA3/ESR (CLE)-related protein 12 (81 aa).

An N-terminal signal peptide occupies residues 1-31 (MENSNKVPISKIGLIMLMIFSTFFMSPHARR). Residues 55–67 (KRSRTDLEDKAVP) show a composition bias toward basic and acidic residues. Positions 55-81 (KRSRTDLEDKAVPGDRLSPGGPNHIHN) are disordered. Hydroxyproline occurs at positions 73 and 76. The O-linked (Ara...) hydroxyproline glycan is linked to P76.

This sequence belongs to the CLV3/ESR signal peptide family. In terms of processing, the O-glycosylation (arabinosylation) of the hydroxyproline Pro-76 enhances binding affinity of the CLE12p peptide for its receptor. In terms of tissue distribution, expressed in young nodules throughout the central tissue. Expressed in the apical region of elongated nodules, corresponding to the meristematic and early infection zones.

The protein localises to the secreted. It localises to the extracellular space. Its function is as follows. Signaling peptide involved in the regulation of nodulation. Moves from root to shoot to function with the receptor kinase SUNN, in a signaling pathway that plays roles during cellular differentiation, both at the onset of nodulation, and later during nodule meristem development and subsequent homeostasis. Interacts with SUNN signaling to control nodule numbers. SUNN is involved in the autoregulation of nodulation (AON), a long distance systemic signaling from root to shoot and back again, which allows legumes to limit the number of root nodules formed based on available nitrogen and previous rhizobial colonization. The chain is CLAVATA3/ESR (CLE)-related protein 12 from Medicago truncatula (Barrel medic).